Here is a 442-residue protein sequence, read N- to C-terminus: Putative ammonium transporter sll1017 (442 aa).

13 consecutive transmembrane segments (helical) span residues 5 to 25 (NFPLARYVLGAMLAFLFVGVA), 44 to 64 (LFLLAAAVLVLFMQAGFAMLE), 81 to 101 (TFDVCVGVLLYFLFGYSLMYG), 104 to 124 (PVLGGFFGWGGFGITNNLDNV), 133 to 153 (WLFQAAFAATAATIVSGAVMG), 155 to 175 (MYFKAYLIYSAVITGLVYPIS), 193 to 213 (FAGSLLVHSVGGFAALAAVVV), 240 to 260 (GVFILWVGWYGFNPGSQLAFV), 269 to 289 (MLIAVNTTLSAAAGGLAALAF), 299 to 319 (PNLLVTLNGILGGLVGITAGC), 325 to 345 (WSAIAIGVVAGILSVLGTKLL), 354 to 374 (VGAWPVHGLCGIWGGIAVGIF), and 386 to 406 (IVGSLVIPFWAFITMFFLFYV).

Belongs to the ammonia transporter channel (TC 1.A.11.2) family.

It is found in the cell membrane. The protein is Putative ammonium transporter sll1017 of Synechocystis sp. (strain ATCC 27184 / PCC 6803 / Kazusa).